An 85-amino-acid polypeptide reads, in one-letter code: Exodeoxyribonuclease 7 small subunit (85 aa).

The segment at 66–85 is disordered; that stretch reads SGEGEEVPLDTPDAEDGDGE. The span at 68 to 85 shows a compositional bias: acidic residues; it reads EGEEVPLDTPDAEDGDGE.

This sequence belongs to the XseB family. Heterooligomer composed of large and small subunits.

Its subcellular location is the cytoplasm. It carries out the reaction Exonucleolytic cleavage in either 5'- to 3'- or 3'- to 5'-direction to yield nucleoside 5'-phosphates.. Its function is as follows. Bidirectionally degrades single-stranded DNA into large acid-insoluble oligonucleotides, which are then degraded further into small acid-soluble oligonucleotides. The polypeptide is Exodeoxyribonuclease 7 small subunit (Thioalkalivibrio sulfidiphilus (strain HL-EbGR7)).